A 1297-amino-acid polypeptide reads, in one-letter code: Phosphoribosylformylglycinamidine synthase (1297 aa).

The tract at residues 305–324 is disordered; that stretch reads FPGAATGSGGEIRDEGATGR. 307-318 serves as a coordination point for ATP; the sequence is GAATGSGGEIRD. Asp-679, Glu-718, Asn-722, and Asp-886 together coordinate Mg(2+). An ATP-binding site is contributed by Ser-888. The Glutamine amidotransferase type-1 domain maps to 1044-1297; that stretch reads IAVLREQGVN…LFRNARVFFK (254 aa). Cys-1137 functions as the Nucleophile in the catalytic mechanism. Residues His-1262 and Glu-1264 contribute to the active site.

It in the N-terminal section; belongs to the FGAMS family. Monomer.

The protein localises to the cytoplasm. It catalyses the reaction N(2)-formyl-N(1)-(5-phospho-beta-D-ribosyl)glycinamide + L-glutamine + ATP + H2O = 2-formamido-N(1)-(5-O-phospho-beta-D-ribosyl)acetamidine + L-glutamate + ADP + phosphate + H(+). The protein operates within purine metabolism; IMP biosynthesis via de novo pathway; 5-amino-1-(5-phospho-D-ribosyl)imidazole from N(2)-formyl-N(1)-(5-phospho-D-ribosyl)glycinamide: step 1/2. Functionally, phosphoribosylformylglycinamidine synthase involved in the purines biosynthetic pathway. Catalyzes the ATP-dependent conversion of formylglycinamide ribonucleotide (FGAR) and glutamine to yield formylglycinamidine ribonucleotide (FGAM) and glutamate. The chain is Phosphoribosylformylglycinamidine synthase from Mannheimia succiniciproducens (strain KCTC 0769BP / MBEL55E).